The chain runs to 382 residues: Mucosal addressin cell adhesion molecule 1 (382 aa).

The signal sequence occupies residues 1 to 18; sequence MDFGLALLLAGLLGLLLG. At 19-317 the chain is on the extracellular side; the sequence is QSLQVKPLQV…TGSSKPAGDQ (299 aa). Ig-like domains are found at residues 23–112 and 113–231; these read VKPL…LLVY and AFPD…TSPE. 3 cysteine pairs are disulfide-bonded: cysteine 47-cysteine 94, cysteine 51-cysteine 98, and cysteine 134-cysteine 204. An N-linked (GlcNAc...) asparagine glycan is attached at asparagine 83. Residues 223-314 are disordered; it reads VLHSPTSPEP…VIPTGSSKPA (92 aa). The segment at 226 to 317 is mucin-like; it reads SPTSPEPPDT…TGSSKPAGDQ (92 aa). A 1; truncated repeat occupies 228 to 231; that stretch reads TSPE. The 5.5 X 8 AA tandem repeats of [PS]-P-D-T-T-S-[QP]-E stretch occupies residues 228–271; that stretch reads TSPEPPDTTSPESPDTTSPESPDTTSQEPPDTTSPEPPDKTSPE. Repeat copies occupy residues 232 to 239, 240 to 247, 248 to 255, 256 to 263, and 264 to 271. The segment covering 236-261 has biased composition (low complexity); sequence TSPESPDTTSPESPDTTSQEPPDTTS. Residues 277–288 show a composition bias toward low complexity; sequence GSTHTPRSPGST. The helical transmembrane segment at 318 to 338 threads the bilayer; the sequence is LPAALWTSSAVLGLLLLALPT. Topologically, residues 339–382 are cytoplasmic; sequence YHLWKRCRHLAEDDTHPPASLRLLPQVSAWAGLRGTGQVGISPS.

As to quaternary structure, homodimer. Post-translationally, the Ser/Thr-rich mucin-like domain may provide possible sites for O-glycosylation. In terms of tissue distribution, highly expressed on high endothelial venules (HEV) and lamina propia venules found in the small intestine, and to a lesser extent in the colon and spleen. Very low levels of expression found in pancreas and brain. Not expressed in the thymus, prostate, ovaries, testis, heart, placenta, lung, liver, skeletal muscle, kidney or peripheral blood leukocytes.

It is found in the membrane. In terms of biological role, cell adhesion leukocyte receptor expressed by mucosal venules, helps to direct lymphocyte traffic into mucosal tissues including the Peyer patches and the intestinal lamina propria. It can bind both integrin alpha-4/beta-7 and L-selectin, regulating both the passage and retention of leukocytes. Isoform 2, lacking the mucin-like domain, may be specialized in supporting integrin alpha-4/beta-7-dependent adhesion strengthening, independent of L-selectin binding. This chain is Mucosal addressin cell adhesion molecule 1 (MADCAM1), found in Homo sapiens (Human).